We begin with the raw amino-acid sequence, 569 residues long: Protein AF-9 (569 aa).

The YEATS domain maps to 1-138 (MASSCAVQVK…EDFRRKLLKA (138 aa)). Positions 138-476 (AGGDPNRSIH…PPPPLLKTNN (339 aa)) are disordered. Over residues 149 to 190 (SSSSSSSSSSSSSSSSSSSSSSSSSSSSSSSSSSSSSSSSSS) the composition is skewed to low complexity. The segment covering 202–265 (EHKEKPSKDS…PKPMSKEPKA (64 aa)) has biased composition (basic and acidic residues). Phosphoserine is present on residues Ser289 and Ser295. Positions 296–301 (AKKRKK) match the Nuclear localization signal motif. Residues 304–314 (SEALFKSFSSA) show a composition bias toward low complexity. Positions 323-350 (ADKKQIKDKSHVKMGKVKIESETSEKKK) are enriched in basic and acidic residues. Residue Lys340 forms a Glycyl lysine isopeptide (Lys-Gly) (interchain with G-Cter in SUMO2) linkage. Residues 358-369 (DIVDPNDSDVEE) are compositionally biased toward acidic residues. Residues 372 to 396 (SSKSDSEQPSPASSSSSSSSSFTPS) are compositionally biased toward low complexity. Ser413 and Ser420 each carry phosphoserine. The span at 415–430 (DNEEESDEAEDNDNDS) shows a compositional bias: acidic residues. The segment covering 446 to 462 (VSLSDGSDSESSSASSP) has biased composition (low complexity). Ser484 carries the post-translational modification Phosphoserine.

In terms of assembly, component of the super elongation complex (SEC), at least composed of EAF1, EAF2, CDK9, MLLT3/AF9, AFF (AFF1 or AFF4), the P-TEFb complex and ELL (ELL, ELL2 or ELL3). Interacts with BCOR. Interacts with CBX8. Interacts with ALKBH4. Ubiquitously expressed. Strong expression in the spleen.

It localises to the nucleus. Its subcellular location is the chromosome. Functionally, chromatin reader component of the super elongation complex (SEC), a complex required to increase the catalytic rate of RNA polymerase II transcription by suppressing transient pausing by the polymerase at multiple sites along the DNA. Specifically recognizes and binds acylated histone H3, with a preference for histone H3 that is crotonylated. Crotonylation marks active promoters and enhancers and confers resistance to transcriptional repressors. Recognizes and binds histone H3 crotonylated at 'Lys-9' (H3K9cr), and with slightly lower affinity histone H3 crotonylated at 'Lys-18' (H3K18cr). Also recognizes and binds histone H3 acetylated and butyrylated at 'Lys-9' (H3K9ac and H3K9bu, respectively), but with lower affinity than crotonylated histone H3. In the SEC complex, MLLT3 is required to recruit the complex to crotonylated histones. Recruitment of the SEC complex to crotonylated histones promotes recruitment of DOT1L on active chromatin to deposit histone H3 'Lys-79' methylation (H3K79me). Plays a key role in hematopoietic stem cell (HSC) maintenance by preserving, rather than conferring, HSC stemness. Acts by binding to the transcription start site of active genes in HSCs and sustaining level of H3K79me2, probably by recruiting DOT1L. The sequence is that of Protein AF-9 (Mllt3) from Mus musculus (Mouse).